The chain runs to 932 residues: Protocadherin gamma-A3 (932 aa).

An N-terminal signal peptide occupies residues 1-29 (MTNCLSFRNGRGLALLCALLGTLCETGSG). Cadherin domains lie at 30 to 133 (QIRY…APNF), 134 to 242 (PTEE…PPMF), 243 to 347 (TQPE…APEI), 348 to 452 (TITS…PPTF), 453 to 562 (PHLS…APEI), and 570 to 682 (DGST…EPSA). Over 30–692 (QIRYSVSEEL…KPNDSDLTLY (663 aa)) the chain is Extracellular. 3 N-linked (GlcNAc...) asparagine glycosylation sites follow: Asn265, Asn419, and Asn545. The N-linked (GlcNAc...) asparagine glycan is linked to Asn685. Residues 693 to 713 (LVVAVAAVSCVFLAFVIVLLA) form a helical membrane-spanning segment. The Cytoplasmic portion of the chain corresponds to 714 to 932 (LRLRRWHKSR…KKKSGKKEKK (219 aa)). 2 disordered regions span residues 805-841 (NLLQQAPPNTDWRFSQAQRPGTSGSQNGDDTGTWPNN) and 902-932 (ATLTNAAGKRDGKAPAGGNGNKKKSGKKEKK). Residues 922 to 932 (NKKKSGKKEKK) show a composition bias toward basic residues.

It is found in the cell membrane. Its function is as follows. Potential calcium-dependent cell-adhesion protein. May be involved in the establishment and maintenance of specific neuronal connections in the brain. The polypeptide is Protocadherin gamma-A3 (PCDHGA3) (Homo sapiens (Human)).